We begin with the raw amino-acid sequence, 458 residues long: MAIATIDPTTGITLKTFDAHTPEEVENRIARAEAAFRSLQNTSFEERARWMHKAADILESEADEVARLIATEMGKTLTTAKYEALKSATGMRHFADHAQRYLSPETPVPASEVNASNLHVQFDPLGVVLAVMPWNYPLWQAVRFAAPALMAGNTGLLKHASNVPQCALYLGDLFARGGFPEGAFQTLLVEGKDVIPLVDDARIRAVTLTGSVAAGSAIAEAAGRNIKRSVLELGGMDVFIVMPSADIEKAAAQAVIARLQNSGQSCIAAKRFYVHEDVYDRFEHLFVTGMAEAVAGDPLDESTSFGPLATERGRQDVHELVRDAREKGAAVQCGGEIPEGEGWYYPATVLTGVTEDMRIYREECFGPVACLYKVSSLQEAIALSNDSDFGLSSSVWTNDETEATEAARSIEAGGVFINGLTASFPAVPFGGLKDSGYGRELSAYGIREFVNIKTVWTS.

NADP(+)-binding positions include 134–135 (WN), 158–161 (KHAS), and 210–211 (GS). Glutamate 232 (proton acceptor) is an active-site residue. Position 233 (leucine 233) interacts with NADP(+). Cysteine 266 serves as the catalytic Nucleophile. Glutamate 363 is an NADP(+) binding site.

Belongs to the aldehyde dehydrogenase family. In terms of assembly, monomer.

The catalysed reaction is an aldehyde + NAD(+) + H2O = a carboxylate + NADH + 2 H(+). It carries out the reaction an aldehyde + NADP(+) + H2O = a carboxylate + NADPH + 2 H(+). It functions in the pathway carbohydrate metabolism; D-xylose degradation. Functionally, aldehyde dehydrogenase able to oxidize various aldehydes such as formaldehyde, glyceraldehyde, butyraldehyde, glutaraldehyde and benzaldehyde (in vitro). Is likely involved in the oxidative D-xylose degradation pathway, catalyzing the oxidation step of 2-oxoglutarate semialdehyde to 2-oxoglutarate. Is able to use both NAD(+) and NADP(+); however, shows a preference for NADP(+). Does not display succinate semialdehyde dehydrogenase activity. The protein is Aldehyde dehydrogenase (aldh) of Paenarthrobacter nicotinovorans (Arthrobacter nicotinovorans).